A 322-amino-acid polypeptide reads, in one-letter code: Epiphycan (322 aa).

The signal sequence occupies residues 1 to 19 (MKTLAGLVLGLVIFDAAVT). O-linked (GalNAc...) threonine glycosylation is present at Thr-60. Ser-64 is a glycosylation site (O-linked (Xyl...) (dermatan sulfate) serine). A disordered region spans residues 64 to 101 (SGNRELLTPPPQPEKAQEEEEEEESTPRLIDGSSPQEP). O-linked (GalNAc...) serine glycosylation is present at Ser-96. The LRRNT domain occupies 106–143 (VLGPHTNEDFPTCLLCTCISTTVYCDDHELDAIPPLPK). Cys-118 and Cys-130 are oxidised to a cystine. 5 LRR repeats span residues 144-165 (NTAY…DFAS), 168-189 (DLKR…AFRK), 192-213 (QLRE…PTTL), 238-258 (DLHH…PLPE), and 259-280 (NLRA…TFCN). A disulfide bridge connects residues Cys-279 and Cys-312. Asn-283 and Asn-302 each carry an N-linked (GlcNAc...) asparagine glycan. Residues 290–310 (ALEDIRLDGNPINLSKTPQAY) form an LRR 6 repeat.

This sequence belongs to the small leucine-rich proteoglycan (SLRP) family. SLRP class III subfamily. The O-linked polysaccharides on Thr-60 and Ser-96 are probably the mucin type linked to GalNAc. There is one glycosaminoglycan chain, known to be dermatan sulfate, and it is probably the O-glycosylation at Ser-64. As to expression, cartilage, ligament, and placenta.

Its subcellular location is the secreted. The protein resides in the extracellular space. It localises to the extracellular matrix. May have a role in bone formation and also in establishing the ordered structure of cartilage through matrix organization. This Homo sapiens (Human) protein is Epiphycan (EPYC).